The following is a 205-amino-acid chain: Golgi apparatus membrane protein TVP23 homolog B (205 aa).

Met-1 is subject to N-acetylmethionine. The segment covering 1 to 21 has biased composition (acidic residues); the sequence is MLSQDSNDDTEDVSLFDAEEE. The segment at 1-27 is disordered; it reads MLSQDSNDDTEDVSLFDAEEETTNRPR. A run of 4 helical transmembrane segments spans residues 34–53, 54–72, 126–146, and 152–172; these read PVASFFHLFFRVSAVVVYLL, CELLSSSFIACMVTIILLL, IFWLGLIACPVLWVIFAFSAL, and KWLAVVIMGVVLQGANLYGYI.

The protein belongs to the TVP23 family.

The protein resides in the membrane. This chain is Golgi apparatus membrane protein TVP23 homolog B (Tvp23b), found in Mus musculus (Mouse).